A 129-amino-acid polypeptide reads, in one-letter code: Probable cytochrome b5 2 (129 aa).

The region spanning 3 to 79 (EKTITVEEVL…LEKFYIGNLL (77 aa)) is the Cytochrome b5 heme-binding domain. The heme site is built by His-38 and His-62. A helical membrane pass occupies residues 105 to 125 (VKPAMWLFVLVMVVAYFAFRK).

The protein belongs to the cytochrome b5 family.

It localises to the endoplasmic reticulum membrane. It is found in the microsome membrane. The protein localises to the mitochondrion. In terms of biological role, membrane bound hemoprotein which function as an electron carrier for several membrane bound oxygenases. This is Probable cytochrome b5 2 (oca8) from Schizosaccharomyces pombe (strain 972 / ATCC 24843) (Fission yeast).